Reading from the N-terminus, the 322-residue chain is Lymphokine-activated killer T-cell-originated protein kinase (322 aa).

At methionine 1 the chain carries N-acetylmethionine. Threonine 9 and threonine 24 each carry phosphothreonine. Serine 32 is modified (phosphoserine). The Protein kinase domain occupies 32–322; that stretch reads SPFMQKLGFG…HIVEALETDV (291 aa). Residue 38–46 coordinates ATP; that stretch reads LGFGTGVNV. Serine 59 bears the Phosphoserine mark. Lysine 64 is a binding site for ATP. Aspartate 167 serves as the catalytic Proton acceptor. Residue lysine 169 forms a Glycyl lysine isopeptide (Lys-Gly) (interchain with G-Cter in SUMO2) linkage. A PDZ-interaction region spans residues 320–322; it reads TDV.

This sequence belongs to the protein kinase superfamily. STE Ser/Thr protein kinase family. MAP kinase kinase subfamily. In terms of assembly, interacts with DLG1 and TP53. In terms of processing, phosphorylated; in a cell-cycle dependent manner at mitosis. Expressed in the testis and placenta. In the testis, restrictedly expressed in outer cell layer of seminiferous tubules.

It carries out the reaction L-seryl-[protein] + ATP = O-phospho-L-seryl-[protein] + ADP + H(+). The enzyme catalyses L-threonyl-[protein] + ATP = O-phospho-L-threonyl-[protein] + ADP + H(+). The catalysed reaction is L-tyrosyl-[protein] + ATP = O-phospho-L-tyrosyl-[protein] + ADP + H(+). Activated by phosphorylation. Its function is as follows. Phosphorylates MAP kinase p38. Seems to be active only in mitosis. May also play a role in the activation of lymphoid cells. When phosphorylated, forms a complex with TP53, leading to TP53 destabilization and attenuation of G2/M checkpoint during doxorubicin-induced DNA damage. The chain is Lymphokine-activated killer T-cell-originated protein kinase (PBK) from Homo sapiens (Human).